A 202-amino-acid chain; its full sequence is Transmembrane protein 223 (202 aa).

Topologically, residues 1 to 43 are mitochondrial matrix; it reads MAAPWRRWPTGLLAVLRPLLTCRPLQGTTLQRDVLLFEHDRGR. Residues 44–64 traverse the membrane as a helical segment; sequence FFTILGLFCAGQGVFWASMAV. Residues 65 to 97 lie on the Mitochondrial intermembrane side of the membrane; the sequence is AAVSRPPVPVQPLDAEVPNRGPFDLRSALWRYG. Residues 98-118 form a helical membrane-spanning segment; the sequence is LAVGCGAIGALVLGAGLLFSL. Residues 119–202 are Mitochondrial matrix-facing; that stretch reads RSVRSVVLRA…DNTVGAYRSL (84 aa).

Belongs to the TMEM223 family. As to quaternary structure, associates with the mitochondrial ribosome.

The protein localises to the mitochondrion inner membrane. Its function is as follows. Mitochondrial ribosome-associated protein involved in the first steps of cytochrome c oxidase complex (complex IV) biogenesis. Stimulates the translation of MT-CO1 mRNA and is a constituent of early MT-CO1 assembly intermediates. In Homo sapiens (Human), this protein is Transmembrane protein 223.